The chain runs to 406 residues: 1H-pyrrole-2-carbonyl-[peptidyl-carrier protein] brominase (406 aa).

Positions 17, 36, 42, 44, 45, 48, 101, 124, 291, and 304 each coordinate FAD.

This sequence belongs to the flavin-dependent halogenase family.

The catalysed reaction is (1H-pyrrole-2-carbonyl)-[peptidyl-carrier protein] + 3 bromide + 3 FADH2 + 3 O2 = (3,4,5-tribromo-1H-pyrrole-2-carbonyl)-[peptidyl-carrier protein] + 3 FAD + 6 H2O. The enzyme catalyses (1H-pyrrole-2-carbonyl)-[peptidyl-carrier protein] + bromide + FADH2 + O2 = (5-bromo-1H-pyrrole-2-carbonyl)-[peptidyl-carrier protein] + FAD + 2 H2O. It catalyses the reaction (5-bromo-1H-pyrrole-2-carbonyl)-[peptidyl-carrier protein] + bromide + FADH2 + O2 = (4,5-dibromo-1H-pyrrole-2-carbonyl)-[peptidyl-carrier protein] + FAD + 2 H2O. It carries out the reaction (4,5-dibromo-1H-pyrrole-2-carbonyl)-[peptidyl-carrier protein] + bromide + FADH2 + O2 = (3,4,5-tribromo-1H-pyrrole-2-carbonyl)-[peptidyl-carrier protein] + FAD + 2 H2O. Its function is as follows. Brominase involved in the biosynthesis of polybrominated aromatic organic compounds. Catalyzes three successive rounds of bromination of pyrrolyl-S-Bmp1 to produce mono-, di- and tribromopyrrolyl-S-Bmp1. This is 1H-pyrrole-2-carbonyl-[peptidyl-carrier protein] brominase from Pseudoalteromonas luteoviolacea (strain 2ta16).